Here is a 296-residue protein sequence, read N- to C-terminus: Phosphatidylserine decarboxylase proenzyme (296 aa).

Catalysis depends on charge relay system; for autoendoproteolytic cleavage activity residues D100, H157, and S263. The active-site Schiff-base intermediate with substrate; via pyruvic acid; for decarboxylase activity is the S263. S263 is modified (pyruvic acid (Ser); by autocatalysis).

The protein belongs to the phosphatidylserine decarboxylase family. PSD-B subfamily. Prokaryotic type I sub-subfamily. As to quaternary structure, heterodimer of a large membrane-associated beta subunit and a small pyruvoyl-containing alpha subunit. It depends on pyruvate as a cofactor. Is synthesized initially as an inactive proenzyme. Formation of the active enzyme involves a self-maturation process in which the active site pyruvoyl group is generated from an internal serine residue via an autocatalytic post-translational modification. Two non-identical subunits are generated from the proenzyme in this reaction, and the pyruvate is formed at the N-terminus of the alpha chain, which is derived from the carboxyl end of the proenzyme. The autoendoproteolytic cleavage occurs by a canonical serine protease mechanism, in which the side chain hydroxyl group of the serine supplies its oxygen atom to form the C-terminus of the beta chain, while the remainder of the serine residue undergoes an oxidative deamination to produce ammonia and the pyruvoyl prosthetic group on the alpha chain. During this reaction, the Ser that is part of the protease active site of the proenzyme becomes the pyruvoyl prosthetic group, which constitutes an essential element of the active site of the mature decarboxylase.

It is found in the cell membrane. The enzyme catalyses a 1,2-diacyl-sn-glycero-3-phospho-L-serine + H(+) = a 1,2-diacyl-sn-glycero-3-phosphoethanolamine + CO2. It participates in phospholipid metabolism; phosphatidylethanolamine biosynthesis; phosphatidylethanolamine from CDP-diacylglycerol: step 2/2. Catalyzes the formation of phosphatidylethanolamine (PtdEtn) from phosphatidylserine (PtdSer). This Actinobacillus pleuropneumoniae serotype 7 (strain AP76) protein is Phosphatidylserine decarboxylase proenzyme.